The chain runs to 967 residues: Siderophore exporter MmpL4 (967 aa).

11 helical membrane-spanning segments follow: residues alanine 26–valine 46, valine 210–isoleucine 230, valine 242–leucine 262, alanine 303–alanine 323, isoleucine 333–valine 353, tryptophan 384–proline 404, tryptophan 769–isoleucine 789, phenylalanine 793–leucine 813, isoleucine 821–valine 841, valine 875–leucine 895, and threonine 913–tryptophan 934. The disordered stretch occupies residues alanine 943–glycine 967.

Belongs to the resistance-nodulation-cell division (RND) (TC 2.A.6) family. MmpL subfamily. Interacts with MmpS4.

The protein resides in the cell inner membrane. Its function is as follows. Part of an export system, which is required for biosynthesis and secretion of siderophores. In Mycobacterium tuberculosis (strain CDC 1551 / Oshkosh), this protein is Siderophore exporter MmpL4 (mmpL4).